Here is a 282-residue protein sequence, read N- to C-terminus: Pantothenate synthetase (282 aa).

ATP is bound at residue 30 to 37 (MGYLHEGH). His37 acts as the Proton donor in catalysis. Residue Gln61 coordinates (R)-pantoate. A beta-alanine-binding site is contributed by Gln61. Residue 147 to 150 (GMKD) coordinates ATP. Residue Gln153 participates in (R)-pantoate binding. Residues Val176 and 184-187 (KSSR) contribute to the ATP site.

This sequence belongs to the pantothenate synthetase family. In terms of assembly, homodimer.

The protein localises to the cytoplasm. The catalysed reaction is (R)-pantoate + beta-alanine + ATP = (R)-pantothenate + AMP + diphosphate + H(+). Its pathway is cofactor biosynthesis; (R)-pantothenate biosynthesis; (R)-pantothenate from (R)-pantoate and beta-alanine: step 1/1. Functionally, catalyzes the condensation of pantoate with beta-alanine in an ATP-dependent reaction via a pantoyl-adenylate intermediate. In Bacillus cytotoxicus (strain DSM 22905 / CIP 110041 / 391-98 / NVH 391-98), this protein is Pantothenate synthetase.